Here is a 491-residue protein sequence, read N- to C-terminus: Ketol-acid reductoisomerase (NADP(+)) (491 aa).

The 194-residue stretch at Ala15 to Ser208 folds into the KARI N-terminal Rossmann domain. NADP(+) is bound by residues Cys45 to Gln48, Arg68, Arg76, Ser78, and Asp108 to Gln110. His132 is a catalytic residue. Gly158 is an NADP(+) binding site. 2 consecutive KARI C-terminal knotted domains span residues Ser209–Gln344 and Phe345–Met484. The Mg(2+) site is built by Asp217, Glu221, Glu389, and Glu393. Ser414 serves as a coordination point for substrate.

Belongs to the ketol-acid reductoisomerase family. The cofactor is Mg(2+).

It catalyses the reaction (2R)-2,3-dihydroxy-3-methylbutanoate + NADP(+) = (2S)-2-acetolactate + NADPH + H(+). The catalysed reaction is (2R,3R)-2,3-dihydroxy-3-methylpentanoate + NADP(+) = (S)-2-ethyl-2-hydroxy-3-oxobutanoate + NADPH + H(+). It participates in amino-acid biosynthesis; L-isoleucine biosynthesis; L-isoleucine from 2-oxobutanoate: step 2/4. Its pathway is amino-acid biosynthesis; L-valine biosynthesis; L-valine from pyruvate: step 2/4. Functionally, involved in the biosynthesis of branched-chain amino acids (BCAA). Catalyzes an alkyl-migration followed by a ketol-acid reduction of (S)-2-acetolactate (S2AL) to yield (R)-2,3-dihydroxy-isovalerate. In the isomerase reaction, S2AL is rearranged via a Mg-dependent methyl migration to produce 3-hydroxy-3-methyl-2-ketobutyrate (HMKB). In the reductase reaction, this 2-ketoacid undergoes a metal-dependent reduction by NADPH to yield (R)-2,3-dihydroxy-isovalerate. The sequence is that of Ketol-acid reductoisomerase (NADP(+)) from Salmonella schwarzengrund (strain CVM19633).